The sequence spans 438 residues: MEGRLANMWRLTVNESKFVETALQSELRVDGRGLYDYRKLTIKFGKEYGSSEVQLGQTHVMGFVTAQLVQPYKDRPNEGSLSIFTEFSPMADPSFEPGRPGESAVELGRIIDRGLRESRAVDTESLCVLAGKMVWSVRIDLHILDNGGNLVDAANIAALAALMTFRRPDCTVGGENGQEVIIHPLEEREPLPLIIHHLPIAFTFGFFNKGNIVVMDPTYVEEAVMCGRMTVTVNANGDICAIQKPGEEGVNQSVILHCLRLASSRAAATTKIIREEVEAYNCERSLQKVKRHPTLAKSEVSGPTVAVKEEHRKSSDQERAAEISREHVERLKLSTEEVRSSKEEEAANFKGGPSNWDPYSEAMDVDSLKVSLASRGDPVTKSSSTKKMNGSGNAQKVGVEISVEEVTGELGKKDTKHKDGEMTLKDAVKPKKKRKNKS.

Disordered stretches follow at residues 293-322 (PTLAKSEVSGPTVAVKEEHRKSSDQERAAE) and 334-438 (STEE…KNKS). Composition is skewed to basic and acidic residues over residues 307–322 (VKEEHRKSSDQERAAE) and 334–347 (STEEVRSSKEEEAA). Residues 380–394 (TKSSSTKKMNGSGNA) are compositionally biased toward polar residues. Residues 410–429 (LGKKDTKHKDGEMTLKDAVK) show a composition bias toward basic and acidic residues.

This sequence belongs to the RNase PH family.

The protein resides in the cytoplasm. The protein localises to the nucleus. Functionally, probable 3'-&gt;5' exoribonuclease involved in the regulation of cuticular wax biosynthesis by controlling the expression of CER3. May act by degrading a specific mRNA species encoding a negative regulator of CER3 transcription. Can perform exosomal functions and complement the yeast rrp45 null mutant. The sequence is that of Exosome complex component RRP45B from Arabidopsis thaliana (Mouse-ear cress).